A 426-amino-acid polypeptide reads, in one-letter code: Actin-like protein 6B (426 aa).

An essential for mediating its function in dendritic development; may contribute to neuronal-specific targeting region spans residues 39–82 (TTVGLLAAEEGGGLELEGEKEKKGKIFHIDTNALHVPRDGAEVM).

Belongs to the actin family. In terms of assembly, component of the multiprotein chromatin-remodeling complexes SWI/SNF: SWI/SNF-A (BAF), SWI/SNF-B (PBAF) and related complexes. The canonical complex contains a catalytic subunit (either SMARCA4/BRG1/BAF190A or SMARCA2/BRM/BAF190B) and at least SMARCE1, ACTL6A/BAF53, SMARCC1/BAF155, SMARCC2/BAF170, and SMARCB1/SNF5/BAF47. Other subunits specific to each of the complexes may also be present permitting several possible combinations developmentally and tissue specific. Component of the BAF complex, which includes at least actin (ACTB), ARID1A/BAF250A, ARID1B/BAF250B, SMARCA2/BRM, SMARCA4/BRG1/BAF190A, ACTL6A/BAF53, ACTL6B/BAF53B, SMARCE1/BAF57, SMARCC1/BAF155, SMARCC2/BAF170, SMARCB1/SNF5/INI1, and one or more SMARCD1/BAF60A, SMARCD2/BAF60B, or SMARCD3/BAF60C. Component of neuron-specific chromatin remodeling complex (nBAF complex) composed of at least, ARID1A/BAF250A or ARID1B/BAF250B, SMARCD1/BAF60A or SMARCD2/BAF60B or SMARCD3/BAF60C, SMARCA2/BRM/BAF190B, SMARCA4/BRG1/BAF190A, SMARCB1/BAF47, SMARCC1/BAF155, SMARCE1/BAF57, SMARCC2/BAF170, DPF1/BAF45B, DPF3/BAF45C, ACTL6B/BAF53B and actin (ACTB). Note that the nBAF complex is polymorphic in regard to the ATPase, SMARCA2 and SMARCA4 occupying mutually exclusive positions. May be a component of the SWI/SNF-B (PBAF) chromatin remodeling complex, at least composed of SMARCA4/BRG1, SMARCB1/BAF47/SNF5, ACTL6A/BAF53A or ACTL6B/BAF53B, SMARCE1/BAF57, SMARCD1/BAF60A, SMARCD2/BAF60B, perhaps SMARCD3/BAF60C, SMARCC1/BAF155, SMARCC2/BAF170, PBRM1/BAF180, ARID2/BAF200 and actin.

The protein resides in the nucleus. Involved in transcriptional activation and repression of select genes by chromatin remodeling (alteration of DNA-nucleosome topology). Component of SWI/SNF chromatin remodeling complexes that carry out key enzymatic activities, changing chromatin structure by altering DNA-histone contacts within a nucleosome in an ATP-dependent manner. Belongs to the neuron-specific chromatin remodeling complex (nBAF complex), as such plays a role in remodeling mononucleosomes in an ATP-dependent fashion, and is required for postmitotic neural development and dendritic outgrowth. During neural development a switch from a stem/progenitor to a postmitotic chromatin remodeling mechanism occurs as neurons exit the cell cycle and become committed to their adult state. The transition from proliferating neural stem/progenitor cells to postmitotic neurons requires a switch in subunit composition of the npBAF and nBAF complexes. As neural progenitors exit mitosis and differentiate into neurons, npBAF complexes which contain ACTL6A/BAF53A and PHF10/BAF45A, are exchanged for homologous alternative ACTL6B/BAF53B and DPF1/BAF45B or DPF3/BAF45C subunits in neuron-specific complexes (nBAF). The npBAF complex is essential for the self-renewal/proliferative capacity of the multipotent neural stem cells. The nBAF complex along with CREST plays a role regulating the activity of genes essential for dendrite growth. ACTL6B/BAF53B is not essential for assembly of the nBAF complex but is required for targeting the complex and CREST to the promoter of genes essential for dendritic growth. Essential for neuronal maturation and dendrite development. The polypeptide is Actin-like protein 6B (ACTL6B) (Bos taurus (Bovine)).